Here is a 414-residue protein sequence, read N- to C-terminus: Carboxynorspermidine synthase (414 aa).

It belongs to the saccharopine dehydrogenase family. Carboxynorspermidine synthase subfamily.

The enzyme catalyses carboxynorspermidine + NADP(+) + H2O = L-aspartate 4-semialdehyde + propane-1,3-diamine + NADPH + H(+). The catalysed reaction is carboxyspermidine + NADP(+) + H2O = L-aspartate 4-semialdehyde + putrescine + NADPH + H(+). Its function is as follows. Involved in norspermidine biosynthesis. Catalyzes the synthesis of carboxynorspermidine from L-aspartate 4-semialdehyde and 1,3-diaminopropane. Is also active with putrescine as a substrate. Essential for biofilm formation. The protein is Carboxynorspermidine synthase of Vibrio cholerae serotype O1 (strain ATCC 39315 / El Tor Inaba N16961).